A 704-amino-acid polypeptide reads, in one-letter code: Elongation factor G (704 aa).

Residues asparagine 10–leucine 290 enclose the tr-type G domain. GTP-binding positions include alanine 19–threonine 26, aspartate 83–histidine 87, and asparagine 137–aspartate 140.

This sequence belongs to the TRAFAC class translation factor GTPase superfamily. Classic translation factor GTPase family. EF-G/EF-2 subfamily.

It localises to the cytoplasm. In terms of biological role, catalyzes the GTP-dependent ribosomal translocation step during translation elongation. During this step, the ribosome changes from the pre-translocational (PRE) to the post-translocational (POST) state as the newly formed A-site-bound peptidyl-tRNA and P-site-bound deacylated tRNA move to the P and E sites, respectively. Catalyzes the coordinated movement of the two tRNA molecules, the mRNA and conformational changes in the ribosome. This Paenarthrobacter aurescens (strain TC1) protein is Elongation factor G.